The primary structure comprises 614 residues: Maltose permease MAL61 (614 aa).

The interval 1–48 is disordered; it reads MKGLSSLINRKKDRNDSHLDEIENGVNATEFNSIEMEEQGKKSDFDLS. Residues 1–108 lie on the Cytoplasmic side of the membrane; sequence MKGLSSLINR…AAAWSLLVST (108 aa). Residues 38 to 48 show a composition bias toward basic and acidic residues; it reads EQGKKSDFDLS. Residues 109-129 traverse the membrane as a helical segment; it reads TLIQEGYDTAILGAFYALPVF. Topologically, residues 130 to 144 are extracellular; that stretch reads QKKYGSLNSNTGDYE. The helical transmembrane segment at 145 to 165 threads the bilayer; it reads ISVSWQIGLCLCYMAGEIVGL. Topologically, residues 166 to 180 are cytoplasmic; sequence QVTGPSVDYMGNRYT. The chain crosses the membrane as a helical span at residues 181 to 201; it reads LIMALFFLAAFIFILYFCKSL. Residue Gly-202 is a topological domain, extracellular. Residues 203-223 traverse the membrane as a helical segment; sequence MIAVGQALCGMPWGCFQCLTV. Residues 224–236 are Cytoplasmic-facing; sequence SYASEICPLALRY. The chain crosses the membrane as a helical span at residues 237-257; that stretch reads YLTTYSNLCWTFGQLFAAGIM. Over 258–272 the chain is Extracellular; it reads KNSQNKYANSELGYK. A helical membrane pass occupies residues 273 to 293; that stretch reads LPFALQWIWPLPLAVGIFLAP. The Cytoplasmic portion of the chain corresponds to 294–364; it reads ESPWWLVKKG…KDGINRRRTR (71 aa). The chain crosses the membrane as a helical span at residues 365-385; it reads IACLCWIGQCSCGASLIGYST. The Extracellular portion of the chain corresponds to 386 to 398; that stretch reads YFYEKAGVSTDTA. Residues 399–419 form a helical membrane-spanning segment; sequence FTFSIIQYCLGIAATFVSWWA. Topologically, residues 420–427 are cytoplasmic; sequence SKYCGRFD. The chain crosses the membrane as a helical span at residues 428-448; sequence LYAFGLAFQAIMFFIIGGLGC. At 449–460 the chain is on the extracellular side; it reads SDTHGAKMGSGA. The chain crosses the membrane as a helical span at residues 461–481; sequence LLMVVAFFYNLGIAPVVFCLV. The Cytoplasmic segment spans residues 482 to 493; sequence SEMPSSRLRTKT. Residues 494–514 traverse the membrane as a helical segment; that stretch reads IILARNAYNVIQVVVTVLIMY. The Extracellular segment spans residues 515–526; the sequence is QLNSEKWNWGAK. A helical membrane pass occupies residues 527–547; it reads SGFFWGGFCLATLAWAVVDLP. Topologically, residues 548 to 614 are cytoplasmic; that stretch reads ETAGRTFIEI…GRSTPSVVNK (67 aa). Residues 594–614 are disordered; sequence KEDLETSVVDEGRSTPSVVNK.

Belongs to the major facilitator superfamily. Sugar transporter (TC 2.A.1.1) family.

It localises to the membrane. Functionally, transporter for maltose. This Saccharomyces cerevisiae (Baker's yeast) protein is Maltose permease MAL61 (MAL61).